Here is a 369-residue protein sequence, read N- to C-terminus: Glutamate 5-kinase (369 aa).

ATP is bound at residue lysine 14. Residues serine 54, aspartate 141, and asparagine 153 each coordinate substrate. Residues 173–174 and 215–221 contribute to the ATP site; these read SD and TGGMVTK. One can recognise a PUA domain in the interval 277–355; sequence RGRLHLDPGA…SELATALGPA (79 aa).

It belongs to the glutamate 5-kinase family.

It is found in the cytoplasm. It catalyses the reaction L-glutamate + ATP = L-glutamyl 5-phosphate + ADP. The protein operates within amino-acid biosynthesis; L-proline biosynthesis; L-glutamate 5-semialdehyde from L-glutamate: step 1/2. Catalyzes the transfer of a phosphate group to glutamate to form L-glutamate 5-phosphate. The chain is Glutamate 5-kinase from Salinispora arenicola (strain CNS-205).